Here is a 457-residue protein sequence, read N- to C-terminus: Tubulin gamma-2 chain (457 aa).

142–148 (AGGTGSG) contacts GTP.

The protein belongs to the tubulin family. In terms of assembly, interacts with Ote. In terms of tissue distribution, expressed in nurse cells and oocytes of developing egg chambers.

It is found in the cytoplasm. It localises to the cytoskeleton. The protein localises to the microtubule organizing center. Its subcellular location is the centrosome. The protein resides in the spindle. In terms of biological role, tubulin is the major constituent of microtubules. The gamma chain is found at microtubule organizing centers (MTOC) such as the spindle poles or the centrosome, suggesting that it is involved in the minus-end nucleation of microtubule assembly. Required for oocyte activation and consequently for organization of the female meiotic spindle. Essential for centrosome organization and assembly of biastral mitotic spindles in embryos. Plays a role in stabilizing the augmin complex on the meiotic spindle. The chain is Tubulin gamma-2 chain (gammaTub37C) from Drosophila melanogaster (Fruit fly).